A 455-amino-acid polypeptide reads, in one-letter code: MMSFSVLQVKRLQLELITPAKPTLQETKFLSDIDDQEGLRFQVPVIMCYKDNPSLNKNCNPVKVIREALSRALVYYYPLAGRLKEGPNRKLMVDCNGEGILFVEASADVTLEQLGDKILPPCPLLEEFLFNFPGSDGIIGCPLLLVQVTCLTCGGFILALRVNHTMCDAPGLLLFLTAIAEMARGAHAPSILPVWERELLFSRDPPRITCVHHEYEDVIDHSDGSYASSNQSNMVQRSFYFGAKEMRVLRKQIPPHVISTCSTFDLITACLSKCRTLALKINPKQAVRVSCVVNARGKHHNVRLPLGYYGNAFACPAAFSKAEPLCKNPLGYALELVKKAKATMNEEYLRSVADLLVLRGRPQYSSTGSYLIVSDNTRAGFGDVNFGWGQPVFAGPAKALDLISFYVQHNNNTEDGILVPMCLPSSAMERFQQELESITPEPKEDICNNLRSTSQ.

Residues His164 and Asn385 each act as proton acceptor in the active site.

It belongs to the plant acyltransferase family. Expressed at very low levels in the skin of ripe fruit.

Functionally, involved in the biosynthesis of volatile esters which confer ripe apple fruit flavor. Alcohol acyl transferase that can use a wide range of alcohols as substrate to produce esters. The sequence is that of Alcohol acyl transferase 1 allele GSb from Malus domestica (Apple).